The sequence spans 302 residues: Lipooligosaccharide biosynthesis protein lex-1 (302 aa).

7 repeat units span residues S42–Q45, S46–Q49, S50–Q53, S54–Q57, S58–Q61, S62–Q65, and S66–Q69. The tract at residues S42 to Q69 is 7 X 4 AA tandem repeats of S-I-N-Q.

This sequence belongs to the glycosyltransferase 25 family.

Functionally, involved in extracellular lipooligosaccharide (LOS) biosynthesis and virulence expression. Involved in the synthesis of the oligosaccharide moiety of the LOS molecule by adding GalNAc. This chain is Lipooligosaccharide biosynthesis protein lex-1 (lex1), found in Haemophilus influenzae (strain ATCC 51907 / DSM 11121 / KW20 / Rd).